A 98-amino-acid chain; its full sequence is Pancreatic polypeptide prohormone (98 aa).

The signal sequence occupies residues 1–29 (MAVAYYCLSLFLLSTWVALLLQPLQGAWG). Tyr65 is subject to Tyrosine amide.

It belongs to the NPY family. No icosapeptide-like peptide is cleaved from the C-terminal.

The protein resides in the secreted. Hormone secreted by pancreatic cells that acts as a regulator of pancreatic and gastrointestinal functions probably by signaling through the G protein-coupled receptor NPY4R2. The sequence is that of Pancreatic polypeptide prohormone (Ppy) from Rattus norvegicus (Rat).